A 177-amino-acid chain; its full sequence is Nucleoside triphosphate/diphosphate phosphatase (177 aa).

R23 serves as the catalytic Proton donor. N87, D103, D105, D107, D120, and E123 together coordinate Mg(2+).

The protein belongs to the Ntdp family. Requires Mg(2+) as cofactor.

The catalysed reaction is a ribonucleoside 5'-triphosphate + H2O = a ribonucleoside 5'-diphosphate + phosphate + H(+). It catalyses the reaction a ribonucleoside 5'-diphosphate + H2O = a ribonucleoside 5'-phosphate + phosphate + H(+). Its function is as follows. Has nucleoside phosphatase activity towards nucleoside triphosphates and nucleoside diphosphates. The sequence is that of Nucleoside triphosphate/diphosphate phosphatase from Streptococcus gordonii (strain Challis / ATCC 35105 / BCRC 15272 / CH1 / DL1 / V288).